We begin with the raw amino-acid sequence, 105 residues long: Cell division protein FtsL (105 aa).

Topologically, residues 1–24 (MAEKMEKTGQILQMQLKRFSRVEK) are cytoplasmic. The helical transmembrane segment at 25–45 (AFYFSIAVTTLIVAISIIFMQ) threads the bilayer. Topologically, residues 46 to 105 (TKLLQVQNDLTKINAQIEEKKTELDDAKQEVNELLRAERLKEIANSHDLQLNNENIRIAE) are extracellular.

It belongs to the FtsL family.

It is found in the cell membrane. Its function is as follows. Essential cell division protein. This is Cell division protein FtsL from Streptococcus pneumoniae (strain ATCC BAA-255 / R6).